We begin with the raw amino-acid sequence, 269 residues long: Ribosomal RNA large subunit methyltransferase E (269 aa).

Gly-58, Trp-60, Asp-78, Asp-96, and Asp-120 together coordinate S-adenosyl-L-methionine. Lys-160 functions as the Proton acceptor in the catalytic mechanism. Positions His-234–Leu-269 are disordered. Residues Lys-258–Leu-269 show a composition bias toward basic and acidic residues.

It belongs to the class I-like SAM-binding methyltransferase superfamily. RNA methyltransferase RlmE family.

The protein localises to the cytoplasm. The enzyme catalyses uridine(2552) in 23S rRNA + S-adenosyl-L-methionine = 2'-O-methyluridine(2552) in 23S rRNA + S-adenosyl-L-homocysteine + H(+). Its function is as follows. Specifically methylates the uridine in position 2552 of 23S rRNA at the 2'-O position of the ribose in the fully assembled 50S ribosomal subunit. This chain is Ribosomal RNA large subunit methyltransferase E, found in Methanococcus aeolicus (strain ATCC BAA-1280 / DSM 17508 / OCM 812 / Nankai-3).